The primary structure comprises 248 residues: Triosephosphate isomerase (248 aa).

9-11 (NWK) contacts substrate. The Electrophile role is filled by histidine 94. Catalysis depends on glutamate 166, which acts as the Proton acceptor. Substrate-binding positions include glycine 172, serine 211, and 232-233 (GG).

This sequence belongs to the triosephosphate isomerase family. As to quaternary structure, homodimer.

The protein resides in the cytoplasm. The enzyme catalyses D-glyceraldehyde 3-phosphate = dihydroxyacetone phosphate. The protein operates within carbohydrate biosynthesis; gluconeogenesis. It functions in the pathway carbohydrate degradation; glycolysis; D-glyceraldehyde 3-phosphate from glycerone phosphate: step 1/1. In terms of biological role, involved in the gluconeogenesis. Catalyzes stereospecifically the conversion of dihydroxyacetone phosphate (DHAP) to D-glyceraldehyde-3-phosphate (G3P). This Vesicomyosocius okutanii subsp. Calyptogena okutanii (strain HA) protein is Triosephosphate isomerase.